Here is a 559-residue protein sequence, read N- to C-terminus: Estrogen receptor beta (559 aa).

The segment at 1–155 (MAVACSPEKD…SSGGKADLHF (155 aa)) is modulating. Residues 128–148 (TSSKSARRRSQENEEGEVSSG) form a disordered region. NR C4-type zinc fingers lie at residues 156–176 (CAVC…CEGC) and 192–216 (CPAT…LHKC). The segment at residues 156–221 (CAVCHDYASG…RLHKCYNVGM (66 aa)) is a DNA-binding region (nuclear receptor). A compositionally biased stretch (polar residues) spans 243 to 254 (RLSSQGRTSGPS). A disordered region spans residues 243-269 (RLSSQGRTSGPSVLNGPAVGPLNTPQP). One can recognise an NR LBD domain in the interval 273–509 (TSKQLIERIM…DLLLEMLDAH (237 aa)). The tract at residues 514–559 (SRLPRRSPQQETVEQCDAPARPHSPGTSGPTNTWTPSCTGGRGEPQ) is disordered. Over residues 538-551 (PGTSGPTNTWTPSC) the composition is skewed to polar residues.

This sequence belongs to the nuclear hormone receptor family. NR3 subfamily. In terms of assembly, binds DNA as a homodimer. Can form a heterodimer with ER-alpha.

It localises to the nucleus. In terms of biological role, binds estrogens with an affinity similar to that of ER-alpha, and activates expression of reporter genes containing estrogen response elements (ERE) in an estrogen-dependent manner. This chain is Estrogen receptor beta (esr2), found in Sparus aurata (Gilthead sea bream).